The following is a 131-amino-acid chain: Large ribosomal subunit protein eL32 (131 aa).

Belongs to the eukaryotic ribosomal protein eL32 family.

This is Large ribosomal subunit protein eL32 (rpl32e) from Sulfurisphaera tokodaii (strain DSM 16993 / JCM 10545 / NBRC 100140 / 7) (Sulfolobus tokodaii).